Consider the following 438-residue polypeptide: 23S rRNA (uracil(1939)-C(5))-methyltransferase RlmD (438 aa).

A TRAM domain is found at 10–69 (KASVNTKHLSVDVVRLDHNGAGIAFVDKKPVFIEGALPGEKAIIQFIEQKKQFSRAKLIK). [4Fe-4S] cluster-binding residues include Cys82, Cys88, Cys91, and Cys169. 6 residues coordinate S-adenosyl-L-methionine: Gln272, Phe301, Asn306, Glu322, Asn349, and Asp370. The Nucleophile role is filled by Cys396.

This sequence belongs to the class I-like SAM-binding methyltransferase superfamily. RNA M5U methyltransferase family. RlmD subfamily.

The enzyme catalyses uridine(1939) in 23S rRNA + S-adenosyl-L-methionine = 5-methyluridine(1939) in 23S rRNA + S-adenosyl-L-homocysteine + H(+). Catalyzes the formation of 5-methyl-uridine at position 1939 (m5U1939) in 23S rRNA. This Aliivibrio fischeri (strain MJ11) (Vibrio fischeri) protein is 23S rRNA (uracil(1939)-C(5))-methyltransferase RlmD.